We begin with the raw amino-acid sequence, 258 residues long: 6-phosphogluconolactonase (258 aa).

Residue alanine 2 is modified to N-acetylalanine. At serine 49 the chain carries Phosphoserine. At lysine 180 the chain carries N6-acetyllysine.

This sequence belongs to the glucosamine/galactosamine-6-phosphate isomerase family. 6-phosphogluconolactonase subfamily.

The protein resides in the cytoplasm. The catalysed reaction is 6-phospho-D-glucono-1,5-lactone + H2O = 6-phospho-D-gluconate + H(+). It participates in carbohydrate degradation; pentose phosphate pathway; D-ribulose 5-phosphate from D-glucose 6-phosphate (oxidative stage): step 2/3. Functionally, hydrolysis of 6-phosphogluconolactone to 6-phosphogluconate. This chain is 6-phosphogluconolactonase, found in Homo sapiens (Human).